Consider the following 598-residue polypeptide: Elongation factor 4 (598 aa).

Positions 4-186 (SHIRNFAIIA…AIVSRLPAPS (183 aa)) constitute a tr-type G domain. Residues 16–21 (DHGKST) and 133–136 (NKID) each bind GTP.

It belongs to the TRAFAC class translation factor GTPase superfamily. Classic translation factor GTPase family. LepA subfamily.

The protein resides in the cell inner membrane. It catalyses the reaction GTP + H2O = GDP + phosphate + H(+). Required for accurate and efficient protein synthesis under certain stress conditions. May act as a fidelity factor of the translation reaction, by catalyzing a one-codon backward translocation of tRNAs on improperly translocated ribosomes. Back-translocation proceeds from a post-translocation (POST) complex to a pre-translocation (PRE) complex, thus giving elongation factor G a second chance to translocate the tRNAs correctly. Binds to ribosomes in a GTP-dependent manner. The sequence is that of Elongation factor 4 from Ehrlichia chaffeensis (strain ATCC CRL-10679 / Arkansas).